We begin with the raw amino-acid sequence, 189 residues long: Ribosome maturation factor RimM (189 aa).

Residues 95 to 177 form the PRC barrel domain; that stretch reads EDDEFYYADL…AGLVDDPEEL (83 aa).

Belongs to the RimM family. In terms of assembly, binds ribosomal protein uS19.

The protein resides in the cytoplasm. Functionally, an accessory protein needed during the final step in the assembly of 30S ribosomal subunit, possibly for assembly of the head region. Essential for efficient processing of 16S rRNA. May be needed both before and after RbfA during the maturation of 16S rRNA. It has affinity for free ribosomal 30S subunits but not for 70S ribosomes. The polypeptide is Ribosome maturation factor RimM (Rhizobium leguminosarum bv. trifolii (strain WSM2304)).